The following is a 2544-amino-acid chain: Highly reducing polyketide synthase pkhB (2544 aa).

Residues 9–438 form the Ketosynthase family 3 (KS3) domain; sequence SEPIAIIGMS…GTNAHVILES (430 aa). Catalysis depends on for beta-ketoacyl synthase activity residues Cys182, His317, and His358. Residues 566–876 form a malonyl-CoA:ACP transacylase (MAT) domain region; that stretch reads VFTGQVFRRS…PYWGCLVRDE (311 aa). An N-terminal hotdog fold region spans residues 948-1082; sequence HELLGMPVAG…GMVGIEESAV (135 aa). The dehydratase (DH) domain stretch occupies residues 948-1252; it reads HELLGMPVAG…VELAALGRGS (305 aa). The PKS/mFAS DH domain maps to 948–1254; the sequence is HELLGMPVAG…LAALGRGSSA (307 aa). His980 (proton acceptor; for dehydratase activity) is an active-site residue. The interval 1095–1254 is C-terminal hotdog fold; the sequence is YTRQPNPQDL…LAALGRGSSA (160 aa). The Proton donor; for dehydratase activity role is filled by Asp1165. Residues 1398–1573 form a methyltransferase (CMet) domain region; sequence SSLRQLSALL…FSGLDLEIYD (176 aa). The interval 1826 to 2142 is enoyl reductase (ER) domain; it reads GHLGTLAFAE…TGDQMGKVVL (317 aa). Residues 2169 to 2356 form a ketoreductase (KR) domain region; it reads ASYLIVGGVG…GVAIDLGPIS (188 aa). Positions 2462-2539 constitute a Carrier domain; sequence EGARLIGAAI…ALAGLVAEKS (78 aa). O-(pantetheine 4'-phosphoryl)serine is present on Ser2499.

Requires pantetheine 4'-phosphate as cofactor.

It functions in the pathway secondary metabolite biosynthesis. Highly reducing polyketide synthase; part of the pkh gene cluster that mediates the biosynthesis of 2,4-dihydroxy-6-[(3E,5E,7E)-2-oxonona-3,5,7-trienyl]benzaldehyde. The highly reducing polyketide synthase pkhB first produces the (2E,4E,6E)-octa-2,4,6-trienyl strater unit for the non-reducing polyketide synthase pkhA. This octatrienoyl starter is then loaded onto the SAT domain of the NR-PKS pkhA to be condensed with 4 malonyl-CoA units to yield 2,4-dihydroxy-6-[(3E,5E,7E)-2-oxonona-3,5,7-trienyl]benzaldehyde. The chain is Highly reducing polyketide synthase pkhB from Emericella nidulans (strain FGSC A4 / ATCC 38163 / CBS 112.46 / NRRL 194 / M139) (Aspergillus nidulans).